The sequence spans 132 residues: Small ribosomal subunit protein eS17B (132 aa).

Residue Ser-43 is modified to Phosphoserine.

It belongs to the eukaryotic ribosomal protein eS17 family. In terms of assembly, component of the small ribosomal subunit (SSU). Mature yeast ribosomes consist of a small (40S) and a large (60S) subunit. The 40S small subunit contains 1 molecule of ribosomal RNA (18S rRNA) and at least 33 different proteins. The large 60S subunit contains 3 rRNA molecules (25S, 5.8S and 5S rRNA) and at least 46 different proteins.

The protein resides in the cytoplasm. Component of the ribosome, a large ribonucleoprotein complex responsible for the synthesis of proteins in the cell. The small ribosomal subunit (SSU) binds messenger RNAs (mRNAs) and translates the encoded message by selecting cognate aminoacyl-transfer RNA (tRNA) molecules. The large subunit (LSU) contains the ribosomal catalytic site termed the peptidyl transferase center (PTC), which catalyzes the formation of peptide bonds, thereby polymerizing the amino acids delivered by tRNAs into a polypeptide chain. The nascent polypeptides leave the ribosome through a tunnel in the LSU and interact with protein factors that function in enzymatic processing, targeting, and the membrane insertion of nascent chains at the exit of the ribosomal tunnel. The protein is Small ribosomal subunit protein eS17B (rps1702) of Schizosaccharomyces pombe (strain 972 / ATCC 24843) (Fission yeast).